The sequence spans 53 residues: KELLDADGDILRNGGPAYPGLMPGVERDLPASGWGLPRRTGDESCPLNVKAVR.

The tract at residues 33–53 (GWGLPRRTGDESCPLNVKAVR) is disordered.

Belongs to the protease inhibitor I3 (leguminous Kunitz-type inhibitor) family. In terms of assembly, heterodimer of an alpha and a beta chain linked by a disulfide bond.

In terms of biological role, inhibits trypsin with a Ki of 0.25 uM. Inhibits the trypsin-like proteases in midguts of larval H.armigera, S.exigua, and P.rapae. The sequence is that of Kunitz-type trypsin inhibitor alpha chain from Albizia kalkora (Kalkora mimosa).